An 89-amino-acid chain; its full sequence is Cytochrome c oxidase subunit 7A, mitochondrial (89 aa).

A mitochondrion-targeting transit peptide spans 1–31; that stretch reads MMNLSRAVVRSFATTAGRRSAAVPKDQIEKG. Topologically, residues 32–58 are mitochondrial matrix; the sequence is YFEIRKVQEHFQKKDGKPVFLKGSVVD. Residues 59 to 81 traverse the membrane as a helical segment; sequence NVLYRVTVALALVGIGGMGKLFY. Residues 82-89 lie on the Mitochondrial intermembrane side of the membrane; it reads ELSVPKKE.

This sequence belongs to the cytochrome c oxidase VIIa family. Component of the cytochrome c oxidase (complex IV, CIV), a multisubunit enzyme composed of a catalytic core of 3 subunits and several supernumerary subunits. The complex exists as a monomer or a dimer and forms supercomplexes (SCs) in the inner mitochondrial membrane with ubiquinol-cytochrome c oxidoreductase (cytochrome b-c1 complex, complex III, CIII).

The protein resides in the mitochondrion inner membrane. Its pathway is energy metabolism; oxidative phosphorylation. Functionally, component of the cytochrome c oxidase, the last enzyme in the mitochondrial electron transport chain which drives oxidative phosphorylation. The respiratory chain contains 3 multisubunit complexes succinate dehydrogenase (complex II, CII), ubiquinol-cytochrome c oxidoreductase (cytochrome b-c1 complex, complex III, CIII) and cytochrome c oxidase (complex IV, CIV), that cooperate to transfer electrons derived from NADH and succinate to molecular oxygen, creating an electrochemical gradient over the inner membrane that drives transmembrane transport and the ATP synthase. Cytochrome c oxidase is the component of the respiratory chain that catalyzes the reduction of oxygen to water. Electrons originating from reduced cytochrome c in the intermembrane space (IMS) are transferred via the dinuclear copper A center (CU(A)) of subunit 2 and heme A of subunit 1 to the active site in subunit 1, a binuclear center (BNC) formed by heme A3 and copper B (CU(B)). The BNC reduces molecular oxygen to 2 water molecules using 4 electrons from cytochrome c in the IMS and 4 protons from the mitochondrial matrix. In Drosophila melanogaster (Fruit fly), this protein is Cytochrome c oxidase subunit 7A, mitochondrial.